We begin with the raw amino-acid sequence, 26 residues long: SKCRIGKDGFYSVTCTEKENLCFTQF.

Cysteine 3 and cysteine 22 are disulfide-bonded.

This sequence belongs to the three-finger toxin family. Short-chain subfamily. In terms of tissue distribution, expressed by the venom gland.

The protein resides in the secreted. Functionally, binds and may inhibit nicotinic acetylcholine receptors (nAChR). The sequence is that of Nicotinic acetylcholine receptor-binding protein Mnn-1A from Micrurus nigrocinctus (Central American coral snake).